The following is a 169-amino-acid chain: 2-C-methyl-D-erythritol 2,4-cyclodiphosphate synthase (169 aa).

A divalent metal cation-binding residues include D13 and H15. 4-CDP-2-C-methyl-D-erythritol 2-phosphate contacts are provided by residues 13–15 and 39–40; these read DVH and HS. Position 47 (H47) interacts with a divalent metal cation. 4-CDP-2-C-methyl-D-erythritol 2-phosphate contacts are provided by residues 61–63, 66–70, F144, and R147; these read DIG and FPDTD.

This sequence belongs to the IspF family. In terms of assembly, homotrimer. A divalent metal cation serves as cofactor.

The enzyme catalyses 4-CDP-2-C-methyl-D-erythritol 2-phosphate = 2-C-methyl-D-erythritol 2,4-cyclic diphosphate + CMP. It functions in the pathway isoprenoid biosynthesis; isopentenyl diphosphate biosynthesis via DXP pathway; isopentenyl diphosphate from 1-deoxy-D-xylulose 5-phosphate: step 4/6. In terms of biological role, involved in the biosynthesis of isopentenyl diphosphate (IPP) and dimethylallyl diphosphate (DMAPP), two major building blocks of isoprenoid compounds. Catalyzes the conversion of 4-diphosphocytidyl-2-C-methyl-D-erythritol 2-phosphate (CDP-ME2P) to 2-C-methyl-D-erythritol 2,4-cyclodiphosphate (ME-CPP) with a corresponding release of cytidine 5-monophosphate (CMP). The chain is 2-C-methyl-D-erythritol 2,4-cyclodiphosphate synthase from Cupriavidus pinatubonensis (strain JMP 134 / LMG 1197) (Cupriavidus necator (strain JMP 134)).